A 528-amino-acid polypeptide reads, in one-letter code: Butyrophilin subfamily 2 member A2 (528 aa).

The signal sequence occupies residues 1–29 (MESAAALHFSRPASLLLLLLLSLCALVSA). The Extracellular segment spans residues 30–249 (QVTVVGPTDP…SFMPSVSPCA (220 aa)). In terms of domain architecture, Ig-like V-type spans 31 to 142 (VTVVGPTDPI…SYDEAILHLI (112 aa)). Asparagine 47, asparagine 115, and asparagine 121 each carry an N-linked (GlcNAc...) asparagine glycan. Residues cysteine 52 and cysteine 126 are joined by a disulfide bond. An Ig-like C2-type domain is found at 150 to 232 (PLIEMRGHED…NNTLLSQKKE (83 aa)). The chain crosses the membrane as a helical span at residues 250–270 (VALPIVVVILMILFAVCMYWI). A coiled-coil region spans residues 270-320 (INKLQKEKKILSGEKEFERETREIAVKELEKERVQKEEELQVKEKLQEELR). At 271-528 (NKLQKEKKIL…LHRVGTHQSL (258 aa)) the chain is on the cytoplasmic side. The 197-residue stretch at 311–507 (VKEKLQEELR…IFICPALTGA (197 aa)) folds into the B30.2/SPRY domain.

It belongs to the immunoglobulin superfamily. BTN/MOG family. N-glycosylated.

The protein resides in the membrane. Its function is as follows. Inhibits the proliferation of CD4 and CD8 T-cells activated by anti-CD3 antibodies, T-cell metabolism and IL2 and IFNG secretion. This is Butyrophilin subfamily 2 member A2 (BTN2A2) from Pongo abelii (Sumatran orangutan).